The primary structure comprises 66 residues: Omega conotoxin-CVIE (66 aa).

A signal peptide spans 1–17 (VVIVAVLLLTACQLITA). The propeptide occupies 18–40 (NDSRGTQKHRALRSDTKLSMSTR). 3 cysteine pairs are disulfide-bonded: Cys-41–Cys-56, Cys-48–Cys-60, and Cys-55–Cys-65. Residue Cys-65 is modified to Cysteine amide.

Belongs to the conotoxin O1 superfamily. As to expression, expressed by the venom duct.

It is found in the secreted. Functionally, omega-conotoxins act at presynaptic membranes, they bind and block voltage-gated calcium channels. This toxin blocks N-type calcium channels (Cav2.2/CACNA1B). It shows a higher potency when Cav2.2/CACNA1B is only expressed with the ancillary subunit CACNB3 (IC(50)=0.12 nM) than on Cav2.2/CACNA1B expressed with the ancillary subunits CACNA2D1 and CACNB3 (IC(50)=2.6 nM). The Cav2.2/CACNA1B block by this toxin is voltage-independent, whereas the recovery from toxin block is voltage-dependent. There is a low recovery at physiological membrane potential and a high recovery with hyperpolarized potential. This indicates that the toxin has a higher affinity for Cav2.2/CACNA1B in the inactivated state. It is noteworthy that ancillary subunits beta modulate recovery from this toxin block. Cav2.2/CACNA1B expressed with the ancillary subunit CACNB2a (isoform 2a) almost recover completely from this toxin block, whereas Cav2.2/CACNA1B expressed with CACNB3 exhibits relatively weak recovery. Inhibition by this toxin of excitatory synaptic transmission is reversible. In vivo, when tested on rat model of persistent pain, this toxin blocks chronic pain behavior. In Conus catus (Cat cone), this protein is Omega conotoxin-CVIE.